A 338-amino-acid chain; its full sequence is N-acetyl-gamma-glutamyl-phosphate reductase (338 aa).

The active site involves Cys148.

The protein belongs to the NAGSA dehydrogenase family. Type 1 subfamily.

It localises to the cytoplasm. The catalysed reaction is N-acetyl-L-glutamate 5-semialdehyde + phosphate + NADP(+) = N-acetyl-L-glutamyl 5-phosphate + NADPH + H(+). It functions in the pathway amino-acid biosynthesis; L-arginine biosynthesis; N(2)-acetyl-L-ornithine from L-glutamate: step 3/4. Functionally, catalyzes the NADPH-dependent reduction of N-acetyl-5-glutamyl phosphate to yield N-acetyl-L-glutamate 5-semialdehyde. This is N-acetyl-gamma-glutamyl-phosphate reductase from Leptospira borgpetersenii serovar Hardjo-bovis (strain JB197).